The following is a 185-amino-acid chain: UPF0200 protein TK1334 (185 aa).

7-14 is a binding site for ATP; sequence GMPGSGKS.

It belongs to the UPF0200 family.

The polypeptide is UPF0200 protein TK1334 (Thermococcus kodakarensis (strain ATCC BAA-918 / JCM 12380 / KOD1) (Pyrococcus kodakaraensis (strain KOD1))).